The sequence spans 336 residues: Holliday junction branch migration complex subunit RuvB (336 aa).

The large ATPase domain (RuvB-L) stretch occupies residues 4 to 184 (ADRLISAGAT…FGIVQRLEFY (181 aa)). Residues I23, R24, G65, K68, T69, T70, 131–133 (EDY), R174, Y184, and R221 each bind ATP. A Mg(2+)-binding site is contributed by T69. The small ATPAse domain (RuvB-S) stretch occupies residues 185–255 (QVPDLQHIVG…IAAQALDMLN (71 aa)). The head domain (RuvB-H) stretch occupies residues 258–336 (AEGFDYMDRK…HFGITPPEMP (79 aa)). DNA contacts are provided by R294, R313, and R318.

Belongs to the RuvB family. Homohexamer. Forms an RuvA(8)-RuvB(12)-Holliday junction (HJ) complex. HJ DNA is sandwiched between 2 RuvA tetramers; dsDNA enters through RuvA and exits via RuvB. An RuvB hexamer assembles on each DNA strand where it exits the tetramer. Each RuvB hexamer is contacted by two RuvA subunits (via domain III) on 2 adjacent RuvB subunits; this complex drives branch migration. In the full resolvosome a probable DNA-RuvA(4)-RuvB(12)-RuvC(2) complex forms which resolves the HJ.

The protein localises to the cytoplasm. The catalysed reaction is ATP + H2O = ADP + phosphate + H(+). Functionally, the RuvA-RuvB-RuvC complex processes Holliday junction (HJ) DNA during genetic recombination and DNA repair, while the RuvA-RuvB complex plays an important role in the rescue of blocked DNA replication forks via replication fork reversal (RFR). RuvA specifically binds to HJ cruciform DNA, conferring on it an open structure. The RuvB hexamer acts as an ATP-dependent pump, pulling dsDNA into and through the RuvAB complex. RuvB forms 2 homohexamers on either side of HJ DNA bound by 1 or 2 RuvA tetramers; 4 subunits per hexamer contact DNA at a time. Coordinated motions by a converter formed by DNA-disengaged RuvB subunits stimulates ATP hydrolysis and nucleotide exchange. Immobilization of the converter enables RuvB to convert the ATP-contained energy into a lever motion, pulling 2 nucleotides of DNA out of the RuvA tetramer per ATP hydrolyzed, thus driving DNA branch migration. The RuvB motors rotate together with the DNA substrate, which together with the progressing nucleotide cycle form the mechanistic basis for DNA recombination by continuous HJ branch migration. Branch migration allows RuvC to scan DNA until it finds its consensus sequence, where it cleaves and resolves cruciform DNA. This Salmonella choleraesuis (strain SC-B67) protein is Holliday junction branch migration complex subunit RuvB.